Consider the following 162-residue polypeptide: MQSWYLLYCKRGQLQRAQEHLERQAVNCLAPMITLEKIVRGKRTAVSEPLFPNYLFVEFDPEVIHTTTINATRGVSHFVRFGASPAIVPSAVIHQLSVYKPKDIVDPATPYPGDKVIITEGAFEGFQAIFTEPDGEARSMLLLNLINKEIKHSVKNTEFRKL.

Belongs to the RfaH family. Interacts with both the nontemplate DNA and the RNA polymerase (RNAP). Monomer in solution.

Its function is as follows. Enhances distal genes transcription elongation in a specialized subset of operons that encode extracytoplasmic components. RfaH is recruited into a multi-component RNA polymerase complex by the ops element, which is a short conserved DNA sequence located downstream of the main promoter of these operons. Once bound, RfaH suppresses pausing and inhibits Rho-dependent and intrinsic termination at a subset of sites. Termination signals are bypassed, which allows complete synthesis of long RNA chains. Enhances expression of several operons involved in synthesis of lipopolysaccharides, exopolysaccharides, hemolysin, and sex factor. Also negatively controls expression and surface presentation of AG43 and possibly another AG43-independent factor that mediates cell-cell interactions and biofilm formation. The protein is Transcription antitermination protein RfaH of Escherichia coli (strain K12).